Reading from the N-terminus, the 375-residue chain is 23S rRNA (uracil(747)-C(5))-methyltransferase RlmC (375 aa).

[4Fe-4S] cluster-binding residues include Cys-3, Cys-11, Cys-14, and Cys-87. S-adenosyl-L-methionine-binding residues include Gln-212, Phe-241, Glu-262, and Asn-307. Catalysis depends on Cys-334, which acts as the Nucleophile.

Belongs to the class I-like SAM-binding methyltransferase superfamily. RNA M5U methyltransferase family. RlmC subfamily.

It catalyses the reaction uridine(747) in 23S rRNA + S-adenosyl-L-methionine = 5-methyluridine(747) in 23S rRNA + S-adenosyl-L-homocysteine + H(+). Its function is as follows. Catalyzes the formation of 5-methyl-uridine at position 747 (m5U747) in 23S rRNA. This chain is 23S rRNA (uracil(747)-C(5))-methyltransferase RlmC, found in Escherichia coli O127:H6 (strain E2348/69 / EPEC).